A 575-amino-acid chain; its full sequence is Phosphoenolpyruvate-protein phosphotransferase (575 aa).

Position 122 is a phosphotyrosine (Tyr-122). Catalysis depends on His-189, which acts as the Tele-phosphohistidine intermediate. Arg-296 and Arg-332 together coordinate phosphoenolpyruvate. Mg(2+)-binding residues include Glu-431 and Asp-455. Residues 454–455 (ND) and Arg-465 each bind phosphoenolpyruvate. Cys-502 serves as the catalytic Proton donor.

Belongs to the PEP-utilizing enzyme family. As to quaternary structure, homodimer. Interacts with the pole-localizer protein TmaR. Binding to TmaR is reversible as long as TmaR can get phosphorylated, whereas binding to non-phosphorylated TmaR is very strong and shifts the equilibrium toward binding. It depends on Mg(2+) as a cofactor. Phosphorylated on Tyr-122. Phosphorylation on Tyr-122 is important for polar localization but not for interaction with TmaR and for activity.

It is found in the cytoplasm. It catalyses the reaction L-histidyl-[protein] + phosphoenolpyruvate = N(pros)-phospho-L-histidyl-[protein] + pyruvate. With respect to regulation, inhibited by oxalate. Functionally, general (non sugar-specific) component of the phosphoenolpyruvate-dependent sugar phosphotransferase system (sugar PTS). This major carbohydrate active-transport system catalyzes the phosphorylation of incoming sugar substrates concomitantly with their translocation across the cell membrane. Enzyme I transfers the phosphoryl group from phosphoenolpyruvate (PEP) to the phosphoryl carrier protein (HPr). Can also use (Z)-3-fluoro-PEP (ZFPEP), (Z)-3-methyl-PEP (ZMePEP), (Z)-3-chloro-PEP (ZClPEP) and (E)-3-chloro-PEP (EClPEP) as alternative phosphoryl donors. In Escherichia coli (strain K12), this protein is Phosphoenolpyruvate-protein phosphotransferase.